A 285-amino-acid chain; its full sequence is 2-dehydro-3-deoxyphosphooctonate aldolase (285 aa).

The protein belongs to the KdsA family.

It is found in the cytoplasm. It catalyses the reaction D-arabinose 5-phosphate + phosphoenolpyruvate + H2O = 3-deoxy-alpha-D-manno-2-octulosonate-8-phosphate + phosphate. It functions in the pathway carbohydrate biosynthesis; 3-deoxy-D-manno-octulosonate biosynthesis; 3-deoxy-D-manno-octulosonate from D-ribulose 5-phosphate: step 2/3. Its pathway is bacterial outer membrane biogenesis; lipopolysaccharide biosynthesis. The chain is 2-dehydro-3-deoxyphosphooctonate aldolase from Paracidovorax citrulli (strain AAC00-1) (Acidovorax citrulli).